The following is a 198-amino-acid chain: Probable GTP-binding protein EngB (198 aa).

Residues 22 to 197 (TLPEYAFIGR…LDYIEGINNS (176 aa)) enclose the EngB-type G domain. Residues 30-37 (GRSNVGKS), 57-61 (GKTQL), 75-78 (DLPG), 142-145 (TKAD), and 175-178 (ITSA) contribute to the GTP site. Mg(2+) is bound by residues serine 37 and threonine 59.

This sequence belongs to the TRAFAC class TrmE-Era-EngA-EngB-Septin-like GTPase superfamily. EngB GTPase family. Mg(2+) serves as cofactor.

Necessary for normal cell division and for the maintenance of normal septation. The polypeptide is Probable GTP-binding protein EngB (Christiangramia forsetii (strain DSM 17595 / CGMCC 1.15422 / KT0803) (Gramella forsetii)).